A 277-amino-acid polypeptide reads, in one-letter code: NH(3)-dependent NAD(+) synthetase (277 aa).

ATP is bound at residue 46–53 (GISGGQDS). Position 52 (aspartate 52) interacts with Mg(2+). Arginine 142 is a binding site for deamido-NAD(+). Threonine 162 serves as a coordination point for ATP. Glutamate 167 is a binding site for Mg(2+). Deamido-NAD(+)-binding residues include lysine 175 and aspartate 182. Positions 191 and 213 each coordinate ATP. 263-264 (HK) is a deamido-NAD(+) binding site.

The protein belongs to the NAD synthetase family. As to quaternary structure, homodimer.

The catalysed reaction is deamido-NAD(+) + NH4(+) + ATP = AMP + diphosphate + NAD(+) + H(+). It functions in the pathway cofactor biosynthesis; NAD(+) biosynthesis; NAD(+) from deamido-NAD(+) (ammonia route): step 1/1. Functionally, catalyzes the ATP-dependent amidation of deamido-NAD to form NAD. Uses ammonia as a nitrogen source. In Corynebacterium glutamicum (strain R), this protein is NH(3)-dependent NAD(+) synthetase.